Consider the following 372-residue polypeptide: Spermidine/putrescine import ATP-binding protein PotA (372 aa).

In terms of domain architecture, ABC transporter spans 12–242 (IQLKGLNKSF…PTNLFVARFI (231 aa)). 44–51 (GPSGCGKT) contributes to the ATP binding site.

It belongs to the ABC transporter superfamily. Spermidine/putrescine importer (TC 3.A.1.11.1) family. The complex is composed of two ATP-binding proteins (PotA), two transmembrane proteins (PotB and PotC) and a solute-binding protein (PotD).

It is found in the cell inner membrane. It carries out the reaction ATP + H2O + polyamine-[polyamine-binding protein]Side 1 = ADP + phosphate + polyamineSide 2 + [polyamine-binding protein]Side 1.. Functionally, part of the ABC transporter complex PotABCD involved in spermidine/putrescine import. Responsible for energy coupling to the transport system. The sequence is that of Spermidine/putrescine import ATP-binding protein PotA from Photobacterium profundum (strain SS9).